A 194-amino-acid polypeptide reads, in one-letter code: Chitin synthase 2 (194 aa).

The protein belongs to the chitin synthase family. Class III subfamily.

The protein localises to the cell membrane. The enzyme catalyses [(1-&gt;4)-N-acetyl-beta-D-glucosaminyl](n) + UDP-N-acetyl-alpha-D-glucosamine = [(1-&gt;4)-N-acetyl-beta-D-glucosaminyl](n+1) + UDP + H(+). Functionally, polymerizes chitin, a structural polymer of the cell wall and septum, by transferring the sugar moiety of UDP-GlcNAc to the non-reducing end of the growing chitin polymer. This is Chitin synthase 2 (CHS2) from Ajellomyces capsulatus (Darling's disease fungus).